The following is a 227-amino-acid chain: Cytochrome c oxidase subunit 2 (227 aa).

Residues 1–14 lie on the Mitochondrial intermembrane side of the membrane; that stretch reads MAYPFQLGLQDATS. Residues 15–45 form a helical membrane-spanning segment; sequence PIMEELLHFHDHTLMIVFLISSLVLYIISSM. At 46-59 the chain is on the mitochondrial matrix side; the sequence is LTTKLTHTSTMDAQ. Residues 60 to 87 traverse the membrane as a helical segment; sequence EVETVWTILPAIILVLIALPSLRILYMM. Over 88-227 the chain is Mitochondrial intermembrane; the sequence is DETNNPSLTV…YFETWSALMV (140 aa). Positions 161, 196, 198, 200, 204, and 207 each coordinate Cu cation. E198 is a Mg(2+) binding site. Position 218 is a phosphotyrosine (Y218).

The protein belongs to the cytochrome c oxidase subunit 2 family. As to quaternary structure, component of the cytochrome c oxidase (complex IV, CIV), a multisubunit enzyme composed of 14 subunits. The complex is composed of a catalytic core of 3 subunits MT-CO1, MT-CO2 and MT-CO3, encoded in the mitochondrial DNA, and 11 supernumerary subunits COX4I, COX5A, COX5B, COX6A, COX6B, COX6C, COX7A, COX7B, COX7C, COX8 and NDUFA4, which are encoded in the nuclear genome. The complex exists as a monomer or a dimer and forms supercomplexes (SCs) in the inner mitochondrial membrane with NADH-ubiquinone oxidoreductase (complex I, CI) and ubiquinol-cytochrome c oxidoreductase (cytochrome b-c1 complex, complex III, CIII), resulting in different assemblies (supercomplex SCI(1)III(2)IV(1) and megacomplex MCI(2)III(2)IV(2)). Found in a complex with TMEM177, COA6, COX18, COX20, SCO1 and SCO2. Interacts with TMEM177 in a COX20-dependent manner. Interacts with COX20. Interacts with COX16. Cu cation serves as cofactor.

The protein localises to the mitochondrion inner membrane. The catalysed reaction is 4 Fe(II)-[cytochrome c] + O2 + 8 H(+)(in) = 4 Fe(III)-[cytochrome c] + 2 H2O + 4 H(+)(out). Its function is as follows. Component of the cytochrome c oxidase, the last enzyme in the mitochondrial electron transport chain which drives oxidative phosphorylation. The respiratory chain contains 3 multisubunit complexes succinate dehydrogenase (complex II, CII), ubiquinol-cytochrome c oxidoreductase (cytochrome b-c1 complex, complex III, CIII) and cytochrome c oxidase (complex IV, CIV), that cooperate to transfer electrons derived from NADH and succinate to molecular oxygen, creating an electrochemical gradient over the inner membrane that drives transmembrane transport and the ATP synthase. Cytochrome c oxidase is the component of the respiratory chain that catalyzes the reduction of oxygen to water. Electrons originating from reduced cytochrome c in the intermembrane space (IMS) are transferred via the dinuclear copper A center (CU(A)) of subunit 2 and heme A of subunit 1 to the active site in subunit 1, a binuclear center (BNC) formed by heme A3 and copper B (CU(B)). The BNC reduces molecular oxygen to 2 water molecules using 4 electrons from cytochrome c in the IMS and 4 protons from the mitochondrial matrix. The polypeptide is Cytochrome c oxidase subunit 2 (MT-CO2) (Chrysocyon brachyurus (Maned wolf)).